The following is a 655-amino-acid chain: WD repeat-containing protein 70 (655 aa).

Disordered stretches follow at residues 1-24 (MEHS…LAVT) and 43-170 (FEQT…PIHR). A compositionally biased stretch (basic and acidic residues) spans 45–78 (QTRRTAVERSRKTLEAREKEEEMNREKELRKQLE). Residues 99-112 (RDTSSSDSDHSSGS) show a composition bias toward low complexity. The segment covering 148–165 (EEGEDDDDDDLEDEGEED) has biased composition (acidic residues). WD repeat units follow at residues 181-220 (HGTK…ASFK), 228-269 (CECH…ECIK), 282-322 (GHTA…KQKS), 331-370 (GKKV…HPKF), 377-416 (APGT…KPLF), 422-467 (PTLF…RVYE), and 470-509 (ITDA…QRGA). Lys297 is covalently cross-linked (Glycyl lysine isopeptide (Lys-Gly) (interchain with G-Cter in SUMO2)). Residue Lys453 is modified to N6-acetyllysine. Basic and acidic residues predominate over residues 541-566 (REPRQRSTRKQLEKDRLDPLKSHKPE). Residues 541-582 (REPRQRSTRKQLEKDRLDPLKSHKPEPPVAGPGRGGRVGTHG) form a disordered region. Residues 572–582 (PGRGGRVGTHG) show a composition bias toward gly residues. Thr580 carries the post-translational modification Phosphothreonine. Residues Lys591 and Lys597 each participate in a glycyl lysine isopeptide (Lys-Gly) (interchain with G-Cter in SUMO2) cross-link. Ser622 and Ser639 each carry phosphoserine. Residues 632–655 (TMFAQVESDDEESKNEPEWKKRKI) form a disordered region. The segment covering 645–655 (KNEPEWKKRKI) has biased composition (basic and acidic residues).

The protein belongs to the WD repeat GAD-1 family.

The sequence is that of WD repeat-containing protein 70 (Wdr70) from Rattus norvegicus (Rat).